We begin with the raw amino-acid sequence, 623 residues long: Chaperone protein DnaK (623 aa).

Thr-174 is subject to Phosphothreonine; by autocatalysis. Disordered regions lie at residues 470–504 (ITIK…KEEV) and 578–623 (GGAQ…DPDK). Basic and acidic residues predominate over residues 481 to 504 (EEIKKMQKDAEEHAEEDKKRKEEV). The span at 578 to 604 (GGAQGAAGQAGPQGAQGGQPNNDNGSS) shows a compositional bias: low complexity. Positions 614-623 (GDFHKVDPDK) are enriched in basic and acidic residues.

Belongs to the heat shock protein 70 family.

In terms of biological role, acts as a chaperone. This chain is Chaperone protein DnaK, found in Lactobacillus gasseri (strain ATCC 33323 / DSM 20243 / BCRC 14619 / CIP 102991 / JCM 1131 / KCTC 3163 / NCIMB 11718 / NCTC 13722 / AM63).